The chain runs to 535 residues: Ribonuclease Y (535 aa).

The chain crosses the membrane as a helical span at residues 4–24; the sequence is IILLIVSALIGLILGYALISI. The disordered stretch occupies residues 118–141; sequence ENLSSKEKVLDSKEQSLTDKSKHI. One can recognise a KH domain in the interval 225–285; that stretch reads TITSVHLPDD…IRREIARMTL (61 aa). Residues 351 to 444 enclose the HD domain; that stretch reads VLRHSVEVGK…VAAADALSSA (94 aa).

It belongs to the RNase Y family.

The protein resides in the cell membrane. Endoribonuclease that initiates mRNA decay. This chain is Ribonuclease Y, found in Streptococcus pyogenes serotype M1.